Here is a 475-residue protein sequence, read N- to C-terminus: Ras-GEF domain-containing family member 1A (475 aa).

The N-terminal Ras-GEF domain maps to 33 to 164; sequence QDGSLVSGSL…SISQMTQNVL (132 aa). The Ras-GEF domain occupies 208-455; the sequence is DPLILAQQLT…FLASFENEGP (248 aa).

In terms of biological role, guanine nucleotide exchange factor (GEF) with specificity for rap2a and other Ras family proteins (in vitro). Plays a role in cell migration. This is Ras-GEF domain-containing family member 1A (rasgef1a) from Xenopus tropicalis (Western clawed frog).